A 251-amino-acid polypeptide reads, in one-letter code: LexA repressor (251 aa).

A DNA-binding region (H-T-H motif) is located at residues Phe26–Lys46. Residues Ser172 and Lys210 each act as for autocatalytic cleavage activity in the active site.

Belongs to the peptidase S24 family. In terms of assembly, homodimer.

The enzyme catalyses Hydrolysis of Ala-|-Gly bond in repressor LexA.. Represses a number of genes involved in the response to DNA damage (SOS response), including recA and lexA. In the presence of single-stranded DNA, RecA interacts with LexA causing an autocatalytic cleavage which disrupts the DNA-binding part of LexA, leading to derepression of the SOS regulon and eventually DNA repair. In Rhodospirillum rubrum (strain ATCC 11170 / ATH 1.1.1 / DSM 467 / LMG 4362 / NCIMB 8255 / S1), this protein is LexA repressor.